We begin with the raw amino-acid sequence, 377 residues long: Probable pectin lyase D (377 aa).

A signal peptide spans 1-17 (MRVSAFALLAAAATAAA). Intrachain disulfides connect cysteine 80–cysteine 99 and cysteine 89–cysteine 223. Residue asparagine 126 is glycosylated (N-linked (GlcNAc...) asparagine). The active site involves arginine 253. A disulfide bond links cysteine 321 and cysteine 329.

Belongs to the polysaccharide lyase 1 family.

It is found in the secreted. It carries out the reaction Eliminative cleavage of (1-&gt;4)-alpha-D-galacturonan methyl ester to give oligosaccharides with 4-deoxy-6-O-methyl-alpha-D-galact-4-enuronosyl groups at their non-reducing ends.. Its function is as follows. Pectinolytic enzymes consist of four classes of enzymes: pectin lyase, polygalacturonase, pectin methylesterase and rhamnogalacturonase. Among pectinolytic enzymes, pectin lyase is the most important in depolymerization of pectin, since it cleaves internal glycosidic bonds of highly methylated pectins. The sequence is that of Probable pectin lyase D (pelD) from Emericella nidulans (strain FGSC A4 / ATCC 38163 / CBS 112.46 / NRRL 194 / M139) (Aspergillus nidulans).